We begin with the raw amino-acid sequence, 94 residues long: Large ribosomal subunit protein bL27 (94 aa).

The propeptide occupies Met-1–Phe-9. Residues Phe-9–Ala-33 are disordered.

Belongs to the bacterial ribosomal protein bL27 family. The N-terminus is cleaved by ribosomal processing cysteine protease Prp.

In Streptococcus pneumoniae serotype 4 (strain ATCC BAA-334 / TIGR4), this protein is Large ribosomal subunit protein bL27.